The primary structure comprises 386 residues: Succinate--CoA ligase [ADP-forming] subunit beta (386 aa).

Residues 9 to 244 (KEILRKYGVP…HDEEDPLETR (236 aa)) form the ATP-grasp domain. ATP-binding positions include lysine 46, 53-55 (GRG), glutamate 99, cysteine 102, and glutamate 107. Asparagine 199 and aspartate 213 together coordinate Mg(2+). Substrate-binding positions include asparagine 264 and 321-323 (GIM).

This sequence belongs to the succinate/malate CoA ligase beta subunit family. Heterotetramer of two alpha and two beta subunits. Mg(2+) is required as a cofactor.

The catalysed reaction is succinate + ATP + CoA = succinyl-CoA + ADP + phosphate. It catalyses the reaction GTP + succinate + CoA = succinyl-CoA + GDP + phosphate. The protein operates within carbohydrate metabolism; tricarboxylic acid cycle; succinate from succinyl-CoA (ligase route): step 1/1. In terms of biological role, succinyl-CoA synthetase functions in the citric acid cycle (TCA), coupling the hydrolysis of succinyl-CoA to the synthesis of either ATP or GTP and thus represents the only step of substrate-level phosphorylation in the TCA. The beta subunit provides nucleotide specificity of the enzyme and binds the substrate succinate, while the binding sites for coenzyme A and phosphate are found in the alpha subunit. In Rickettsia massiliae (strain Mtu5), this protein is Succinate--CoA ligase [ADP-forming] subunit beta.